Consider the following 212-residue polypeptide: uncharacterized protein (212 aa).

Pentapeptide repeat domains lie at Val-63–Gly-102, Met-103–Gln-142, and Ser-143–Gln-182.

This is an uncharacterized protein from Bacillus subtilis (strain 168).